We begin with the raw amino-acid sequence, 291 residues long: Energy-coupling factor transporter ATP-binding protein EcfA2 (291 aa).

Residues 3-246 form the ABC transporter domain; that stretch reads ITFKDVSYTY…PEWLTSKQLG (244 aa). 40–47 is a binding site for ATP; it reads GHTGSGKS.

The protein belongs to the ABC transporter superfamily. Energy-coupling factor EcfA family. As to quaternary structure, forms a stable energy-coupling factor (ECF) transporter complex composed of 2 membrane-embedded substrate-binding proteins (S component), 2 ATP-binding proteins (A component) and 2 transmembrane proteins (T component).

The protein resides in the cell membrane. Functionally, ATP-binding (A) component of a common energy-coupling factor (ECF) ABC-transporter complex. Unlike classic ABC transporters this ECF transporter provides the energy necessary to transport a number of different substrates. This chain is Energy-coupling factor transporter ATP-binding protein EcfA2, found in Latilactobacillus sakei subsp. sakei (strain 23K) (Lactobacillus sakei subsp. sakei).